Reading from the N-terminus, the 216-residue chain is MNIQLSPLEARVIGCLIEKEVTTPDHYPLTLNSLTTACNQKSNREPVLNLSEAEVQDTVEGLIARRLVSDESSFNSRTSKYQHRFCNTEFGDLKLNQQELGLICCLLLRGAQTPGELRTRTNRLCTFTDVKETEAVLERLANRDSGALVVKLPREPGKRESRYHHLFCGEVDMAAFATSSDNEANASSQYAELEQEVAALREEVAELRALIERHLG.

It belongs to the UPF0502 family.

This is UPF0502 protein VC0395_0676/VC395_A0574 from Vibrio cholerae serotype O1 (strain ATCC 39541 / Classical Ogawa 395 / O395).